The sequence spans 207 residues: ATP-dependent Clp protease proteolytic subunit (207 aa).

S111 (nucleophile) is an active-site residue. H136 is a catalytic residue.

The protein belongs to the peptidase S14 family. As to quaternary structure, fourteen ClpP subunits assemble into 2 heptameric rings which stack back to back to give a disk-like structure with a central cavity, resembling the structure of eukaryotic proteasomes.

The protein localises to the cytoplasm. It carries out the reaction Hydrolysis of proteins to small peptides in the presence of ATP and magnesium. alpha-casein is the usual test substrate. In the absence of ATP, only oligopeptides shorter than five residues are hydrolyzed (such as succinyl-Leu-Tyr-|-NHMec, and Leu-Tyr-Leu-|-Tyr-Trp, in which cleavage of the -Tyr-|-Leu- and -Tyr-|-Trp bonds also occurs).. In terms of biological role, cleaves peptides in various proteins in a process that requires ATP hydrolysis. Has a chymotrypsin-like activity. Plays a major role in the degradation of misfolded proteins. In Aliivibrio fischeri (strain ATCC 700601 / ES114) (Vibrio fischeri), this protein is ATP-dependent Clp protease proteolytic subunit.